A 603-amino-acid polypeptide reads, in one-letter code: MASASTSKYNSHSLENESIKRTSRDGVNRDLTEAVPRLPGETLITDKEVIYICPFNGPIKGRVYITNYRLYLRSLETDSSLILDVPLGVISRIEKMGGATSRGENSYGLDITCKDMRNLRFALKQEGHSRRDMFEILTRYAFPLAHSLPLFAFLNEEKFNVDGWTVYNPVEEYRRQGLPNHHWRITFINKCYELCDTYPALLVVPYRASDDDLRRVATFRSRNRIPVLSWIHPENKTVIVRCSQPLVGMSGKRNKDDEKYLDVIRETNKQISKLTIYDARPSVNAVANKATGGGYESDDAYHNAELFFLDIHNIHVMRESLKKVKDIVYPNVEESHWLSSLESTHWLEHIKLVLTGAIQVADKVSSGKSSVLVHCSDGWDRTAQLTSLAMLMLDSFYRSIEGFEILVQKEWISFGHKFASRIGHGDKNHTDADRSPIFLQFIDCVWQMSKQFPTAFEFNEQFLIIILDHLYSCRFGTFLFNCESARERQKVTERTVSLWSLINSNKEKFKNPFYTKEINRVLYPVASMRHLELWVNYYIRWNPRIKQQQPNPVEQRYMELLALRDEYIKRLEELQLANSAKLSDPPTSPSSPSQMMPHVQTHF.

The span at 1–13 (MASASTSKYNSHS) shows a compositional bias: polar residues. Positions 1–25 (MASASTSKYNSHSLENESIKRTSRD) are disordered. 2 positions are modified to phosphoserine: S13 and S18. The segment covering 14-25 (LENESIKRTSRD) has biased composition (basic and acidic residues). The GRAM domain occupies 29 to 97 (RDLTEAVPRL…GVISRIEKMG (69 aa)). Residues 163–538 (GWTVYNPVEE…RHLELWVNYY (376 aa)) form the Myotubularin phosphatase domain. N288, N313, and I314 together coordinate a 1,2-diacyl-sn-glycero-3-phospho-(1D-myo-inositol-3,5-bisphosphate). N288, N313, and I314 together coordinate a 1,2-diacyl-sn-glycero-3-phospho-(1D-myo-inositol-3-phosphate). Catalysis depends on C375, which acts as the Phosphocysteine intermediate. The a 1,2-diacyl-sn-glycero-3-phospho-(1D-myo-inositol-3,5-bisphosphate) site is built by S376, D377, G378, W379, D380, R381, K417, and R421. Residues S376, D377, G378, W379, D380, and R381 each contribute to the a 1,2-diacyl-sn-glycero-3-phospho-(1D-myo-inositol-3-phosphate) site. R421 is an a 1,2-diacyl-sn-glycero-3-phospho-(1D-myo-inositol-3-phosphate) binding site. The residue at position 495 (T495) is a Phosphothreonine. Positions 579–603 (SAKLSDPPTSPSSPSQMMPHVQTHF) are disordered. A Phosphoserine modification is found at S588.

It belongs to the protein-tyrosine phosphatase family. Non-receptor class myotubularin subfamily. Heterodimer with MTMR12. Interacts with KMT2A/MLL1 (via SET domain). Interacts with DES in skeletal muscle but not in cardiac muscle. Interacts with SPEG.

The protein localises to the cytoplasm. Its subcellular location is the cell membrane. It localises to the cell projection. It is found in the filopodium. The protein resides in the ruffle. The protein localises to the late endosome. Its subcellular location is the myofibril. It localises to the sarcomere. It catalyses the reaction a 1,2-diacyl-sn-glycero-3-phospho-(1D-myo-inositol-3-phosphate) + H2O = a 1,2-diacyl-sn-glycero-3-phospho-(1D-myo-inositol) + phosphate. The catalysed reaction is a 1,2-diacyl-sn-glycero-3-phospho-(1D-myo-inositol-3,5-bisphosphate) + H2O = a 1,2-diacyl-sn-glycero-3-phospho-(1D-myo-inositol-5-phosphate) + phosphate. The enzyme catalyses 1,2-dioctanoyl-sn-glycero-3-phospho-(1-D-myo-inositol-3-phosphate) + H2O = 1,2-dioctanoyl-sn-glycero-3-phospho-(1D-myo-inositol) + phosphate. It carries out the reaction 1,2-dioctanoyl-sn-glycero-3-phospho-(1D-myo-inositol-3,5-bisphosphate) + H2O = 1,2-dioctanoyl-sn-glycero-3-phospho-(1D-myo-inositol-5-phosphate) + phosphate. It catalyses the reaction 1,2-dihexadecanoyl-sn-glycero-3-phospho-(1D-myo-inositol-3,5-phosphate) + H2O = 1,2-dihexadecanoyl-sn-glycero-3-phospho-(1D-myo-inositol-5-phosphate) + phosphate. With respect to regulation, allosterically activated by phosphatidylinositol 5-phosphate (PI5P). Functionally, lipid phosphatase which dephosphorylates phosphatidylinositol 3-monophosphate (PI3P) and phosphatidylinositol 3,5-bisphosphate (PI(3,5)P2). Has also been shown to dephosphorylate phosphotyrosine- and phosphoserine-containing peptides. Negatively regulates EGFR degradation through regulation of EGFR trafficking from the late endosome to the lysosome. Plays a role in vacuolar formation and morphology. Regulates desmin intermediate filament assembly and architecture. Plays a role in mitochondrial morphology and positioning. Required for skeletal muscle maintenance but not for myogenesis. In skeletal muscles, stabilizes MTMR12 protein levels. This Homo sapiens (Human) protein is Myotubularin.